The chain runs to 420 residues: Phosphoglycerate kinase, cytosolic (420 aa).

(2R)-3-phosphoglycerate-binding residues include Val23, Asp24, Phe25, Asn26, Arg39, Ser61, His62, Gly64, Arg65, Arg135, His171, and Arg172. Residue Gly217 coordinates ADP. Gly217 is a binding site for CDP. Lys219 contributes to the (2R)-3-phosphoglycerate binding site. Lys219 serves as a coordination point for AMP. A CDP-binding site is contributed by Asp222. Asp222 contributes to the Mg(2+) binding site. 2 residues coordinate ADP: Lys223 and Gly241. Lys223 contributes to the AMP binding site. Residue Lys223 coordinates ATP. Gly241 lines the CDP pocket. Positions 242 and 314 each coordinate AMP. ATP contacts are provided by Ala242 and Ala314. 2 residues coordinate ADP: Ala314 and Asn338. Positions 339 and 344 each coordinate CDP. ADP-binding residues include Phe344, Glu345, Asp377, and Ser378. Glu345 lines the AMP pocket. Glu345, Asp377, and Ser378 together coordinate ATP. Asp377 contributes to the Mg(2+) binding site.

The protein belongs to the phosphoglycerate kinase family. In terms of assembly, monomer. Requires Mg(2+) as cofactor.

The protein resides in the cytoplasm. The catalysed reaction is (2R)-3-phosphoglycerate + ATP = (2R)-3-phospho-glyceroyl phosphate + ADP. The protein operates within carbohydrate degradation; glycolysis; pyruvate from D-glyceraldehyde 3-phosphate: step 2/5. This is Phosphoglycerate kinase, cytosolic (C1PGK) from Trypanosoma congolense.